We begin with the raw amino-acid sequence, 545 residues long: Carboxypeptidase Y homolog A (545 aa).

Positions 1 to 18 (MKSSLALALLVGGAIASG) are cleaved as a signal peptide. The propeptide occupies 19–125 (PQQQVLREPV…RLDTYDLRVK (107 aa)). Intrachain disulfides connect C179-C418, C313-C327, C337-C360, C344-C353, and C382-C388. An N-linked (GlcNAc...) asparagine glycan is attached at N210. Residue S266 is part of the active site. The active site involves D457. 2 N-linked (GlcNAc...) asparagine glycosylation sites follow: N487 and N507. The active site involves H518.

Belongs to the peptidase S10 family.

It localises to the vacuole. The catalysed reaction is Release of a C-terminal amino acid with broad specificity.. Functionally, vacuolar carboxypeptidase involved in degradation of small peptides. Digests preferentially peptides containing an aliphatic or hydrophobic residue in P1' position, as well as methionine, leucine or phenylalanine in P1 position of ester substrate. The polypeptide is Carboxypeptidase Y homolog A (CPYA) (Ajellomyces capsulatus (strain NAm1 / WU24) (Darling's disease fungus)).